Here is a 227-residue protein sequence, read N- to C-terminus: 2-phospho-L-lactate guanylyltransferase (227 aa).

Belongs to the CofC family. Homodimer.

The catalysed reaction is (2S)-2-phospholactate + GTP + H(+) = (2S)-lactyl-2-diphospho-5'-guanosine + diphosphate. It participates in cofactor biosynthesis; coenzyme F420 biosynthesis. In terms of biological role, guanylyltransferase that catalyzes the activation of (2S)-2-phospholactate (2-PL) as (2S)-lactyl-2-diphospho-5'-guanosine, via the condensation of 2-PL with GTP. It is involved in the biosynthesis of coenzyme F420, a hydride carrier cofactor. This Methanocaldococcus sp. (strain FS406-22) protein is 2-phospho-L-lactate guanylyltransferase.